A 158-amino-acid chain; its full sequence is Glutamyl-tRNA(Gln) amidotransferase subunit C, mitochondrial (158 aa).

This sequence belongs to the GatC family. In terms of assembly, subunit of the heterotrimeric GatCAB amidotransferase (AdT) complex, composed of A, B and C subunits.

The protein localises to the mitochondrion. It carries out the reaction L-glutamyl-tRNA(Gln) + L-glutamine + ATP + H2O = L-glutaminyl-tRNA(Gln) + L-glutamate + ADP + phosphate + H(+). Its function is as follows. Allows the formation of correctly charged Gln-tRNA(Gln) through the transamidation of misacylated Glu-tRNA(Gln) in the mitochondria. The reaction takes place in the presence of glutamine and ATP through an activated gamma-phospho-Glu-tRNA(Gln). This Drosophila grimshawi (Hawaiian fruit fly) protein is Glutamyl-tRNA(Gln) amidotransferase subunit C, mitochondrial.